The primary structure comprises 118 residues: Autophagy-related protein 8 (118 aa).

Gly-116 carries the Phosphatidylethanolamine amidated glycine lipid modification. A propeptide spans 117-118 (EA) (removed in mature form).

The protein belongs to the ATG8 family. Conjugation to phosphatidylethanolamine (PE) leads to homodimerization. Interacts with ATG1, ATG3, ATG4, ATG7 and ATG12. The C-terminal Glu-117 and Ala-118 residues of ATG8 are removed by ATG4 to expose Gly-116 at the C-terminus. This Gly-116 forms then a thioester bond with the 'Cys-550' of ATG7 (E1-like activating enzyme) before being transferred to the 'Cys-244' of ATG3 (the specific E2 conjugating enzyme), in order to be finally amidated with phosphatidylethanolamine. This lipid modification anchors ATG8 to membranes and can be reversed by ATG4, releasing soluble ATG8.

It localises to the cytoplasmic vesicle. It is found in the cvt vesicle membrane. The protein localises to the autophagosome membrane. The protein resides in the vacuole membrane. Ubiquitin-like modifier involved in cytoplasm to vacuole transport (Cvt) vesicles and autophagosome formation. With ATG4, mediates the delivery of the vesicles and autophagosomes to the vacuole via the microtubule cytoskeleton. Required for selective autophagic degradation of the nucleus (nucleophagy) as well as for mitophagy which contributes to regulate mitochondrial quantity and quality by eliminating the mitochondria to a basal level to fulfill cellular energy requirements and preventing excess ROS production. Also participates in membrane fusion events that take place in the early secretory pathway. Also involved in endoplasmic reticulum-specific autophagic process and is essential for the survival of cells subjected to severe ER stress. The ATG8-PE conjugate mediates tethering between adjacent membranes and stimulates membrane hemifusion, leading to expansion of the autophagosomal membrane during autophagy. Moreover not only conjugation, but also subsequent ATG8-PE deconjugation is an important step required to facilitate multiple events during macroautophagy, and especially for efficient autophagosome biogenesis, the assembly of ATG9-containing tubulovesicular clusters into phagophores/autophagosomes, and for the disassembly of PAS-associated ATG components. Autophagy is required for proper vegetative growth, asexual/sexual reproduction, and full virulence. Autophagy is particularly involved in the biosynthesis of deoxynivalenol (DON), an important virulence determinant. This Gibberella zeae (strain ATCC MYA-4620 / CBS 123657 / FGSC 9075 / NRRL 31084 / PH-1) (Wheat head blight fungus) protein is Autophagy-related protein 8.